A 120-amino-acid polypeptide reads, in one-letter code: C-C motif chemokine 2 (120 aa).

An N-terminal signal peptide occupies residues 1-23; it reads MQRSSVLLCLLVIEATFCSLLMA. Q24 bears the Pyrrolidone carboxylic acid mark. Cystine bridges form between C33-C57 and C34-C73. The disordered stretch occupies residues 91 to 120; it reads RTQQKQNSTAPQTSKPLNIRFTTQDPKNRS. Over residues 93 to 120 the composition is skewed to polar residues; sequence QQKQNSTAPQTSKPLNIRFTTQDPKNRS. N97 carries an N-linked (GlcNAc...) asparagine glycan.

This sequence belongs to the intercrine beta (chemokine CC) family. As to quaternary structure, monomer or homodimer; in equilibrium. Is tethered on endothelial cells by glycosaminoglycan (GAG) side chains of proteoglycans. Interacts with TNFAIP6 (via Link domain). In terms of processing, processing at the N-terminus can regulate receptor and target cell selectivity. Deletion of the N-terminal residue converts it from an activator of basophil to an eosinophil chemoattractant. N-Glycosylated.

It is found in the secreted. In terms of biological role, acts as a ligand for C-C chemokine receptor CCR2. Signals through binding and activation of CCR2 and induces a strong chemotactic response and mobilization of intracellular calcium ions. Exhibits a chemotactic activity for monocytes and basophils but not neutrophils or eosinophils. Plays an important role in mediating peripheral nerve injury-induced neuropathic pain. Increases NMDA-mediated synaptic transmission in both dopamine D1 and D2 receptor-containing neurons, which may be caused by MAPK/ERK-dependent phosphorylation of GRIN2B/NMDAR2B. In Cavia porcellus (Guinea pig), this protein is C-C motif chemokine 2 (CCL2).